A 595-amino-acid polypeptide reads, in one-letter code: MAQRFITLILLLCSVLLAPHSAQSSLFGENASFGTKNSQSRFIPVDQAFAFDFHQQGDQLNLSWQIHPGYYLYRQQIKIVPQQAALGAFTLPEGITHHDEFYGEVEIFKQQLTLKIPITQAAEQASVSVTYQGCAEAGFCYPPETRVIPLDVVVAASTASGTAAVNSSATVNPPATTQPEGDATPVPSTLPFSPLWALLIGIGIAFTPCVLPMYPLISAVILGREKPHSQRRILILAVVYVQGMALTYTLLGLVVAAAGLQFQAALQHPYVLIGLSVLFVLLALSMFGLYSLQLPSSLQTRLTQWSNSQRGGSLAGVFAMGALAGLICSPCTTAPLSAILLYIAQSGNMLAGGGTLYLYALGMGIPLVVVTLFGNKLIPRSGPWMQYVKEAFGFVILALPVFLLERVLGDVWGLRLWSLLAVAFFGWAFVLSLKAHAGWVRVCQLLLLAALLIVARPLQDWAFNGNTQQNAVKHINFQPVANLPQLQAVLAQAQGKPVMLDLYADWCVACKEFEKYTFSDDKVQRQLANTLLLQADVTANNAEHATLLKKFNVLGLPTILFFDSQGNEITAARVTGFMDAAQFLQHLQNTPAVTK.

A signal peptide spans 1–24; that stretch reads MAQRFITLILLLCSVLLAPHSAQS. Cys-134 and Cys-140 are disulfide-bonded. Positions 166–186 are disordered; sequence NSSATVNPPATTQPEGDATPV. A run of 9 helical transmembrane segments spans residues 197–217, 233–253, 270–290, 311–331, 332–352, 353–373, 384–404, 411–431, and 435–455; these read ALLI…YPLI, ILIL…LLGL, YVLI…FGLY, GGSL…CSPC, TTAP…MLAG, GGTL…VTLF, WMQY…VFLL, VWGL…AFVL, and AHAG…LIVA. Cys-209 and Cys-331 form a disulfide bridge. In terms of domain architecture, Thioredoxin spans 452–592; sequence LIVARPLQDW…FLQHLQNTPA (141 aa). Cys-507 and Cys-510 are disulfide-bonded.

This sequence belongs to the thioredoxin family. DsbD subfamily.

It localises to the cell inner membrane. It catalyses the reaction [protein]-dithiol + NAD(+) = [protein]-disulfide + NADH + H(+). The enzyme catalyses [protein]-dithiol + NADP(+) = [protein]-disulfide + NADPH + H(+). Required to facilitate the formation of correct disulfide bonds in some periplasmic proteins and for the assembly of the periplasmic c-type cytochromes. Acts by transferring electrons from cytoplasmic thioredoxin to the periplasm. This transfer involves a cascade of disulfide bond formation and reduction steps. The chain is Thiol:disulfide interchange protein DsbD from Yersinia pestis bv. Antiqua (strain Nepal516).